The chain runs to 378 residues: GTPase Obg (378 aa).

The Obg domain occupies 1–159 (MKFVDEATIE…RRLRLELKVL (159 aa)). The 177-residue stretch at 160–336 (ADVGLLGLPN…LIWALQDYLD (177 aa)) folds into the OBG-type G domain. GTP-binding positions include 166 to 173 (GLPNAGKS), 191 to 195 (FTTLH), 213 to 216 (DIPG), 288 to 291 (NKLD), and 317 to 319 (SGL). Mg(2+)-binding residues include Ser-173 and Thr-193. The interval 345-378 (AQDQADGTYVAEDPRFDATRSDAAPPGAPRGGDE) is disordered.

The protein belongs to the TRAFAC class OBG-HflX-like GTPase superfamily. OBG GTPase family. In terms of assembly, monomer. Mg(2+) is required as a cofactor.

It localises to the cytoplasm. An essential GTPase which binds GTP, GDP and possibly (p)ppGpp with moderate affinity, with high nucleotide exchange rates and a fairly low GTP hydrolysis rate. Plays a role in control of the cell cycle, stress response, ribosome biogenesis and in those bacteria that undergo differentiation, in morphogenesis control. This chain is GTPase Obg, found in Bordetella petrii (strain ATCC BAA-461 / DSM 12804 / CCUG 43448).